The primary structure comprises 341 residues: HTH-type transcriptional repressor PurR (341 aa).

Residues 2–56 (ATIKDVAKRANVSTTTVSHVINKTRFVAEETRNAVWAAIKELHYSPSAVARSLKV) enclose the HTH lacI-type domain. The H-T-H motif DNA-binding region spans 4-23 (IKDVAKRANVSTTTVSHVIN). Residues 48 to 56 (SAVARSLKV) mediate DNA binding. Hypoxanthine is bound by residues Tyr73, Arg190, Thr192, Phe221, and Asp275.

As to quaternary structure, homodimer.

Its pathway is purine metabolism; purine nucleotide biosynthesis [regulation]. Its function is as follows. Is the main repressor of the genes involved in the de novo synthesis of purine nucleotides, regulating purB, purC, purEK, purF, purHD, purL, purMN and guaBA expression. PurR is allosterically activated to bind its cognate DNA by binding the purine corepressors, hypoxanthine or guanine, thereby effecting transcription repression. The sequence is that of HTH-type transcriptional repressor PurR from Escherichia coli (strain UTI89 / UPEC).